The sequence spans 155 residues: 6,7-dimethyl-8-ribityllumazine synthase (155 aa).

Residues tryptophan 24, 58–60 (AFE), and 82–84 (AVI) each bind 5-amino-6-(D-ribitylamino)uracil. 87 to 88 (GT) is a (2S)-2-hydroxy-3-oxobutyl phosphate binding site. Histidine 90 acts as the Proton donor in catalysis. Residue phenylalanine 115 participates in 5-amino-6-(D-ribitylamino)uracil binding. Arginine 129 is a binding site for (2S)-2-hydroxy-3-oxobutyl phosphate.

Belongs to the DMRL synthase family. Forms an icosahedral capsid composed of 60 subunits, arranged as a dodecamer of pentamers.

It catalyses the reaction (2S)-2-hydroxy-3-oxobutyl phosphate + 5-amino-6-(D-ribitylamino)uracil = 6,7-dimethyl-8-(1-D-ribityl)lumazine + phosphate + 2 H2O + H(+). It participates in cofactor biosynthesis; riboflavin biosynthesis; riboflavin from 2-hydroxy-3-oxobutyl phosphate and 5-amino-6-(D-ribitylamino)uracil: step 1/2. Functionally, catalyzes the formation of 6,7-dimethyl-8-ribityllumazine by condensation of 5-amino-6-(D-ribitylamino)uracil with 3,4-dihydroxy-2-butanone 4-phosphate. This is the penultimate step in the biosynthesis of riboflavin. The polypeptide is 6,7-dimethyl-8-ribityllumazine synthase (Saccharophagus degradans (strain 2-40 / ATCC 43961 / DSM 17024)).